A 403-amino-acid chain; its full sequence is Chalcone synthase 3 (403 aa).

Cys-170 is a catalytic residue.

It belongs to the thiolase-like superfamily. Chalcone/stilbene synthases family.

It carries out the reaction (E)-4-coumaroyl-CoA + 3 malonyl-CoA + 3 H(+) = 2',4,4',6'-tetrahydroxychalcone + 3 CO2 + 4 CoA. It participates in secondary metabolite biosynthesis; flavonoid biosynthesis. In terms of biological role, the primary product of this enzyme is 4,2',4',6'-tetrahydroxychalcone (also termed naringenin-chalcone or chalcone) which can under specific conditions spontaneously isomerize into naringenin. In Gerbera hybrida (Daisy), this protein is Chalcone synthase 3 (CHS3).